The following is a 372-amino-acid chain: 4-hydroxy-3-methylbut-2-en-1-yl diphosphate synthase (flavodoxin) (372 aa).

4 residues coordinate [4Fe-4S] cluster: Cys270, Cys273, Cys305, and Glu312.

Belongs to the IspG family. [4Fe-4S] cluster serves as cofactor.

The catalysed reaction is (2E)-4-hydroxy-3-methylbut-2-enyl diphosphate + oxidized [flavodoxin] + H2O + 2 H(+) = 2-C-methyl-D-erythritol 2,4-cyclic diphosphate + reduced [flavodoxin]. It participates in isoprenoid biosynthesis; isopentenyl diphosphate biosynthesis via DXP pathway; isopentenyl diphosphate from 1-deoxy-D-xylulose 5-phosphate: step 5/6. In terms of biological role, converts 2C-methyl-D-erythritol 2,4-cyclodiphosphate (ME-2,4cPP) into 1-hydroxy-2-methyl-2-(E)-butenyl 4-diphosphate. In Cronobacter sakazakii (strain ATCC BAA-894) (Enterobacter sakazakii), this protein is 4-hydroxy-3-methylbut-2-en-1-yl diphosphate synthase (flavodoxin).